The primary structure comprises 214 residues: Adenylate kinase (214 aa).

An ATP-binding site is contributed by 10–15 (GAGKGT). The NMP stretch occupies residues 30-59 (STGDLLREEIANNTELGKQAKKLIDGGNLV). Residues T31, R36, 57 to 59 (NLV), 83 to 86 (GFPR), and Q90 each bind AMP. Residues 124–161 (LRRQCKNCGNIFNLRFIKNFDGKCPKCGSTDIYQRADD) form an LID region. R125 contributes to the ATP binding site. Residues C128 and C131 each coordinate Zn(2+). 134 to 135 (IF) provides a ligand contact to ATP. Zn(2+) is bound by residues C147 and C150. 2 residues coordinate AMP: R158 and R169. Residue K197 coordinates ATP.

This sequence belongs to the adenylate kinase family. In terms of assembly, monomer.

It localises to the cytoplasm. It carries out the reaction AMP + ATP = 2 ADP. It participates in purine metabolism; AMP biosynthesis via salvage pathway; AMP from ADP: step 1/1. Its function is as follows. Catalyzes the reversible transfer of the terminal phosphate group between ATP and AMP. Plays an important role in cellular energy homeostasis and in adenine nucleotide metabolism. The protein is Adenylate kinase of Elusimicrobium minutum (strain Pei191).